A 371-amino-acid polypeptide reads, in one-letter code: Carbamoyl phosphate synthase small chain (371 aa).

Positions 1–190 (MRKTAILALE…LYRENEKPLV (190 aa)) are CPSase. Residues Ser-47, Gly-237, and Gly-239 each coordinate L-glutamine. The Glutamine amidotransferase type-1 domain occupies 189–371 (LVAVIDFGVK…FKEFVKMAQG (183 aa)). Cys-264 serves as the catalytic Nucleophile. 4 residues coordinate L-glutamine: Leu-265, Gln-268, Asn-306, and Phe-309. Active-site residues include His-348 and Glu-350.

Belongs to the CarA family. As to quaternary structure, composed of two chains; the small (or glutamine) chain promotes the hydrolysis of glutamine to ammonia, which is used by the large (or ammonia) chain to synthesize carbamoyl phosphate. Tetramer of heterodimers (alpha,beta)4.

The enzyme catalyses hydrogencarbonate + L-glutamine + 2 ATP + H2O = carbamoyl phosphate + L-glutamate + 2 ADP + phosphate + 2 H(+). It carries out the reaction L-glutamine + H2O = L-glutamate + NH4(+). Its pathway is amino-acid biosynthesis; L-arginine biosynthesis; carbamoyl phosphate from bicarbonate: step 1/1. The protein operates within pyrimidine metabolism; UMP biosynthesis via de novo pathway; (S)-dihydroorotate from bicarbonate: step 1/3. Functionally, small subunit of the glutamine-dependent carbamoyl phosphate synthetase (CPSase). CPSase catalyzes the formation of carbamoyl phosphate from the ammonia moiety of glutamine, carbonate, and phosphate donated by ATP, constituting the first step of 2 biosynthetic pathways, one leading to arginine and/or urea and the other to pyrimidine nucleotides. The small subunit (glutamine amidotransferase) binds and cleaves glutamine to supply the large subunit with the substrate ammonia. This chain is Carbamoyl phosphate synthase small chain, found in Aquifex aeolicus (strain VF5).